The chain runs to 290 residues: Nitrogenase iron protein 2 (290 aa).

10-17 is an ATP binding site; sequence GKGGIGKS. Residue Cys98 coordinates [4Fe-4S] cluster. Arg101 bears the ADP-ribosylarginine; by dinitrogenase reductase ADP-ribosyltransferase mark. Residue Cys133 participates in [4Fe-4S] cluster binding.

Belongs to the NifH/BchL/ChlL family. In terms of assembly, homodimer. It depends on [4Fe-4S] cluster as a cofactor. The reversible ADP-ribosylation of Arg-101 inactivates the nitrogenase reductase and regulates nitrogenase activity.

It carries out the reaction N2 + 8 reduced [2Fe-2S]-[ferredoxin] + 16 ATP + 16 H2O = H2 + 8 oxidized [2Fe-2S]-[ferredoxin] + 2 NH4(+) + 16 ADP + 16 phosphate + 6 H(+). In terms of biological role, the key enzymatic reactions in nitrogen fixation are catalyzed by the nitrogenase complex, which has 2 components: the iron protein (component 2) and a component 1 which is either a molybdenum-iron protein, a vanadium-iron, or an iron-iron protein. This chain is Nitrogenase iron protein 2 (vnfH), found in Azotobacter vinelandii.